The primary structure comprises 836 residues: Protein IWS1 homolog A (836 aa).

A disordered region spans residues 1 to 542; it reads MEADNYSPEH…DMKSGKMGDY (542 aa). 8 stretches are compositionally biased toward basic and acidic residues: residues 20–36, 43–122, 133–148, 157–186, 206–218, 288–309, 370–386, and 458–469; these read QDERDSASDDEGNEQRS, HQSE…DRSP, EPVRHSASDSEDDVPR, DERHIKKTASDSEDEAPAKHRVSDTEDKAP, DSKDEAPPKHAAS, VPVKRAASDSEEETHPKGKASD, RSSESDSSDKVDGKKLQ, and ERKSKTETKSAD. A compositionally biased stretch (acidic residues) spans 476–485; that stretch reads SDSENEEENL. The span at 533–542 shows a compositional bias: basic and acidic residues; it reads DMKSGKMGDY. Positions 631–709 constitute a TFIIS N-terminal domain; the sequence is SAIKEWLTPL…NEWSRPIFGL (79 aa). The disordered stretch occupies residues 714–746; it reads KGMTREEREQRDIEQMPQRRRMSSSGGQTPRRD. Positions 716-727 are enriched in basic and acidic residues; that stretch reads MTREEREQRDIE.

It belongs to the IWS1 family.

It localises to the nucleus. In terms of biological role, transcription factor which plays a key role in defining the composition of the RNA polymerase II (RNAPII) elongation complex and in modulating the production of mature mRNA transcripts. This chain is Protein IWS1 homolog A (iws1-a), found in Xenopus laevis (African clawed frog).